The chain runs to 219 residues: Probable nicotinate-nucleotide adenylyltransferase (219 aa).

Belongs to the NadD family.

The catalysed reaction is nicotinate beta-D-ribonucleotide + ATP + H(+) = deamido-NAD(+) + diphosphate. It participates in cofactor biosynthesis; NAD(+) biosynthesis; deamido-NAD(+) from nicotinate D-ribonucleotide: step 1/1. Its function is as follows. Catalyzes the reversible adenylation of nicotinate mononucleotide (NaMN) to nicotinic acid adenine dinucleotide (NaAD). The chain is Probable nicotinate-nucleotide adenylyltransferase from Pseudomonas putida (strain GB-1).